A 543-amino-acid polypeptide reads, in one-letter code: CTP synthase (543 aa).

The amidoligase domain stretch occupies residues 1–265 (MARYIFITGG…DDEVLAAFGI (265 aa)). A CTP-binding site is contributed by Ser-13. UTP is bound at residue Ser-13. 14–19 (SLGKGL) is an ATP binding site. Residue Tyr-54 participates in L-glutamine binding. Asp-71 serves as a coordination point for ATP. Positions 71 and 139 each coordinate Mg(2+). CTP contacts are provided by residues 146-148 (DIE), 186-191 (KTKPTQ), and Lys-222. UTP is bound by residues 186–191 (KTKPTQ) and Lys-222. Position 238–240 (238–240 (RDV)) interacts with ATP. In terms of domain architecture, Glutamine amidotransferase type-1 spans 291-542 (TIAIVGKYTG…VQAAVVQSRL (252 aa)). Gly-353 contributes to the L-glutamine binding site. Cys-380 acts as the Nucleophile; for glutamine hydrolysis in catalysis. L-glutamine-binding positions include 381 to 384 (FGMQ), Glu-404, and Arg-470. Catalysis depends on residues His-515 and Glu-517.

Belongs to the CTP synthase family. In terms of assembly, homotetramer.

It carries out the reaction UTP + L-glutamine + ATP + H2O = CTP + L-glutamate + ADP + phosphate + 2 H(+). The catalysed reaction is L-glutamine + H2O = L-glutamate + NH4(+). It catalyses the reaction UTP + NH4(+) + ATP = CTP + ADP + phosphate + 2 H(+). It functions in the pathway pyrimidine metabolism; CTP biosynthesis via de novo pathway; CTP from UDP: step 2/2. Its activity is regulated as follows. Allosterically activated by GTP, when glutamine is the substrate; GTP has no effect on the reaction when ammonia is the substrate. The allosteric effector GTP functions by stabilizing the protein conformation that binds the tetrahedral intermediate(s) formed during glutamine hydrolysis. Inhibited by the product CTP, via allosteric rather than competitive inhibition. Functionally, catalyzes the ATP-dependent amination of UTP to CTP with either L-glutamine or ammonia as the source of nitrogen. Regulates intracellular CTP levels through interactions with the four ribonucleotide triphosphates. This is CTP synthase from Rhodopseudomonas palustris (strain BisB18).